The chain runs to 494 residues: Cardiolipin synthase (494 aa).

The next 2 helical transmembrane spans lie at 14 to 34 (IILN…AFTI) and 45 to 65 (IWAW…LYLL). PLD phosphodiesterase domains are found at residues 229-256 (MNNR…GDEY) and 407-434 (DNGF…DHRS). Catalysis depends on residues His234, Lys236, Asp241, His412, Lys414, and Asp419.

This sequence belongs to the phospholipase D family. Cardiolipin synthase subfamily.

It is found in the cell membrane. The catalysed reaction is 2 a 1,2-diacyl-sn-glycero-3-phospho-(1'-sn-glycerol) = a cardiolipin + glycerol. Its function is as follows. Catalyzes the reversible phosphatidyl group transfer from one phosphatidylglycerol molecule to another to form cardiolipin (CL) (diphosphatidylglycerol) and glycerol. The sequence is that of Cardiolipin synthase (cls) from Staphylococcus aureus (strain Mu50 / ATCC 700699).